The primary structure comprises 360 residues: Phospho-N-acetylmuramoyl-pentapeptide-transferase (360 aa).

10 helical membrane passes run 21 to 41 (YLTF…LWIG), 73 to 93 (TMGG…WGDL), 94 to 114 (SNPY…IGFV), 132 to 152 (WKYF…YALG), 168 to 188 (IMPQ…VGTS), 199 to 219 (GLAI…AWAT), 239 to 259 (LVIF…FNTY), 263 to 283 (VFMG…IAVL), 288 to 308 (FLLV…ILQV), and 338 to 358 (VIIR…VTLK).

This sequence belongs to the glycosyltransferase 4 family. MraY subfamily. It depends on Mg(2+) as a cofactor.

The protein resides in the cell inner membrane. It carries out the reaction UDP-N-acetyl-alpha-D-muramoyl-L-alanyl-gamma-D-glutamyl-meso-2,6-diaminopimeloyl-D-alanyl-D-alanine + di-trans,octa-cis-undecaprenyl phosphate = di-trans,octa-cis-undecaprenyl diphospho-N-acetyl-alpha-D-muramoyl-L-alanyl-D-glutamyl-meso-2,6-diaminopimeloyl-D-alanyl-D-alanine + UMP. It functions in the pathway cell wall biogenesis; peptidoglycan biosynthesis. In terms of biological role, catalyzes the initial step of the lipid cycle reactions in the biosynthesis of the cell wall peptidoglycan: transfers peptidoglycan precursor phospho-MurNAc-pentapeptide from UDP-MurNAc-pentapeptide onto the lipid carrier undecaprenyl phosphate, yielding undecaprenyl-pyrophosphoryl-MurNAc-pentapeptide, known as lipid I. The protein is Phospho-N-acetylmuramoyl-pentapeptide-transferase of Mannheimia succiniciproducens (strain KCTC 0769BP / MBEL55E).